The following is a 70-amino-acid chain: Cold shock-like protein CspH (70 aa).

Positions 7–67 constitute a CSD domain; sequence GIVKTFDRKS…GLRGPTAANV (61 aa).

The protein resides in the cytoplasm. This chain is Cold shock-like protein CspH (cspH), found in Escherichia coli O6:H1 (strain CFT073 / ATCC 700928 / UPEC).